The sequence spans 768 residues: DNA replication licensing factor MCM3 homolog 2 (768 aa).

An MCM domain is found at 290–497 (TFDLLGNSLA…IDRQISEHVA (208 aa)). 340–347 (GDPSVAKS) contacts ATP. The short motif at 472 to 475 (SRFD) is the Arginine finger element. Residues 661–670 (EMKQQADHDA) are compositionally biased toward basic and acidic residues. The tract at residues 661 to 689 (EMKQQADHDAGATGGTVDGHGSSGNDPMD) is disordered. Positions 672–682 (ATGGTVDGHGS) are enriched in gly residues.

The protein belongs to the MCM family.

It is found in the nucleus. It catalyses the reaction ATP + H2O = ADP + phosphate + H(+). Its function is as follows. Acts as a factor that allows the DNA to undergo a single round of replication per cell cycle. Required for DNA replication and cell proliferation. May act as a component of the MCM complex which is the putative replicative helicase of the replication licensing system in eukaryotic cells. The polypeptide is DNA replication licensing factor MCM3 homolog 2 (ROA2) (Zea mays (Maize)).